Consider the following 367-residue polypeptide: Glutamate 5-kinase (367 aa).

Lysine 17 lines the ATP pocket. Positions 57, 144, and 156 each coordinate substrate. Residues 176–177 (SD) and 217–223 (TGGMTSK) contribute to the ATP site. The PUA domain maps to 279-357 (AGALTLDEGA…SELPGELRRP (79 aa)).

It belongs to the glutamate 5-kinase family.

It is found in the cytoplasm. The catalysed reaction is L-glutamate + ATP = L-glutamyl 5-phosphate + ADP. It functions in the pathway amino-acid biosynthesis; L-proline biosynthesis; L-glutamate 5-semialdehyde from L-glutamate: step 1/2. Functionally, catalyzes the transfer of a phosphate group to glutamate to form L-glutamate 5-phosphate. The sequence is that of Glutamate 5-kinase from Mycobacterium avium (strain 104).